The primary structure comprises 169 residues: Cilia- and flagella-associated protein 276 (169 aa).

Disordered regions lie at residues 26 to 45 (SKKLPYKNPTHLAQQQEPWS) and 150 to 169 (HTAATNGGYSRKKDGGFFST). A compositionally biased stretch (polar residues) spans 36–45 (HLAQQQEPWS). The segment covering 160–169 (RKKDGGFFST) has biased composition (basic and acidic residues).

Microtubule inner protein component of sperm flagellar doublet microtubules. Expressed in cerebrum, cerebellum, gastrocnemius muscle, spinal cord and lung tissues.

The protein resides in the cytoplasm. Its subcellular location is the cytoskeleton. The protein localises to the flagellum axoneme. It is found in the cilium axoneme. Microtubule inner protein (MIP) part of the dynein-decorated doublet microtubules (DMTs) in cilia axoneme, which is required for motile cilia beating. May play an important role for the maintenance of myelin-axon integrity. May affect intracellular Ca(2+) homeostasis. The chain is Cilia- and flagella-associated protein 276 from Homo sapiens (Human).